The following is a 506-amino-acid chain: Bone morphogenetic protein 6 (506 aa).

Positions 1–20 are cleaved as a signal peptide; the sequence is MPGLGRRAQWLCWWWGLLCS. A propeptide spanning residues 21 to 367 is cleaved from the precursor; sequence CGPPPLRPPL…VSEVHVRTTR (347 aa). Disordered regions lie at residues 44–64, 87–125, and 139–195; these read AGGS…SGFL, PHRP…RLKS, and KDDE…PLTS. A compositionally biased stretch (low complexity) spans 96 to 112; the sequence is LQQPQSPVLPQQQQSQQ. Residues 140–153 are compositionally biased toward acidic residues; the sequence is DDEEDGVSEGEGLE. Residues asparagine 234, asparagine 262, asparagine 379, asparagine 397, and asparagine 447 are each glycosylated (N-linked (GlcNAc...) asparagine). The tract at residues 366–397 is disordered; sequence TRSASSRRRQQSRNRSTQSQDVSRGSSASDYN. Polar residues predominate over residues 386 to 397; sequence DVSRGSSASDYN. Cystine bridges form between cysteine 405–cysteine 471, cysteine 434–cysteine 503, and cysteine 438–cysteine 505.

Belongs to the TGF-beta family. In terms of assembly, interacts with SOSTDC1. Interacts (when glycosylated) with type I receptor ACVR1; the interaction may induce HAMP expression. Interacts with type II receptor ACVR2B. Interacts with Hemojuvelin/HJV. Interacts with ERFE; the interaction inhibits BMP-induced transcription of HAMP. Interacts with BMPR1A/ALK3. Forms heterodimers with BMP2 in vitro; the heterodimer then binds to its receptor BMPR1A /ALK3 and may induce HAMP expression.

It is found in the secreted. Its function is as follows. Growth factor of the TGF-beta superfamily that plays essential roles in many developmental processes including cartilage and bone formation. Also plays an important role in the regulation of HAMP/hepcidin expression and iron metabolism by acting as a ligand for hemojuvelin/HJV. Also acts to promote expression of HAMP, potentially via the interaction with its receptor BMPR1A/ALK3. Initiates the canonical BMP signaling cascade by associating with type I receptor ACVR1 and type II receptor ACVR2B. In turn, ACVR1 propagates signal by phosphorylating SMAD1/5/8 that travel to the nucleus and act as activators and repressors of transcription of target. Can also signal through non-canonical pathway such as TAZ-Hippo signaling cascade to modulate VEGF signaling by regulating VEGFR2 expression. The chain is Bone morphogenetic protein 6 (Bmp6) from Rattus norvegicus (Rat).